A 363-amino-acid chain; its full sequence is UDP-N-acetylglucosamine--N-acetylmuramyl-(pentapeptide) pyrophosphoryl-undecaprenol N-acetylglucosamine transferase (363 aa).

UDP-N-acetyl-alpha-D-glucosamine-binding positions include 14-16, R171, S200, and Q290; that span reads TGG.

This sequence belongs to the glycosyltransferase 28 family. MurG subfamily.

The protein resides in the cell inner membrane. The enzyme catalyses di-trans,octa-cis-undecaprenyl diphospho-N-acetyl-alpha-D-muramoyl-L-alanyl-D-glutamyl-meso-2,6-diaminopimeloyl-D-alanyl-D-alanine + UDP-N-acetyl-alpha-D-glucosamine = di-trans,octa-cis-undecaprenyl diphospho-[N-acetyl-alpha-D-glucosaminyl-(1-&gt;4)]-N-acetyl-alpha-D-muramoyl-L-alanyl-D-glutamyl-meso-2,6-diaminopimeloyl-D-alanyl-D-alanine + UDP + H(+). It functions in the pathway cell wall biogenesis; peptidoglycan biosynthesis. Functionally, cell wall formation. Catalyzes the transfer of a GlcNAc subunit on undecaprenyl-pyrophosphoryl-MurNAc-pentapeptide (lipid intermediate I) to form undecaprenyl-pyrophosphoryl-MurNAc-(pentapeptide)GlcNAc (lipid intermediate II). The protein is UDP-N-acetylglucosamine--N-acetylmuramyl-(pentapeptide) pyrophosphoryl-undecaprenol N-acetylglucosamine transferase of Borreliella burgdorferi (strain ATCC 35210 / DSM 4680 / CIP 102532 / B31) (Borrelia burgdorferi).